The sequence spans 529 residues: Tyrosinase (529 aa).

An N-terminal signal peptide occupies residues Met1–Gly18. The Lumenal, melanosome portion of the chain corresponds to Gln19 to Pro476. N-linked (GlcNAc...) asparagine glycans are attached at residues Asn86, Asn111, and Asn161. Residues His180, His202, and His211 each contribute to the Cu cation site. Asn230 and Asn290 each carry an N-linked (GlcNAc...) asparagine glycan. The disordered stretch occupies residues Ser293–Pro313. N-linked (GlcNAc...) asparagine glycans are attached at residues Asn337 and Asn356. Positions 363 and 367 each coordinate Cu cation. Asn371 carries an N-linked (GlcNAc...) asparagine glycan. His390 serves as a coordination point for Cu cation. A helical transmembrane segment spans residues Trp477–Leu497. Residues Ala498 to Phe529 lie on the Cytoplasmic side of the membrane.

The protein belongs to the tyrosinase family. Requires Cu(2+) as cofactor.

The protein resides in the melanosome membrane. Its subcellular location is the melanosome. The enzyme catalyses 2 L-dopa + O2 = 2 L-dopaquinone + 2 H2O. The catalysed reaction is L-tyrosine + O2 = L-dopaquinone + H2O. Its function is as follows. This is a copper-containing oxidase that functions in the formation of pigments such as melanins and other polyphenolic compounds. Catalyzes the initial and rate limiting step in the cascade of reactions leading to melanin production from tyrosine. In addition to hydroxylating tyrosine to DOPA (3,4-dihydroxyphenylalanine), also catalyzes the oxidation of DOPA to DOPA-quinone, and possibly the oxidation of DHI (5,6-dihydroxyindole) to indole-5,6 quinone. The polypeptide is Tyrosinase (TYR) (Gallus gallus (Chicken)).